Reading from the N-terminus, the 421-residue chain is Adenylosuccinate synthetase (421 aa).

Residues 11 to 17 and 39 to 41 each bind GTP; these read GDEGKGK and GHT. Aspartate 12 acts as the Proton acceptor in catalysis. Mg(2+) is bound by residues aspartate 12 and glycine 39. IMP-binding positions include 12–15, 37–40, threonine 129, arginine 143, asparagine 219, threonine 234, and arginine 298; these read DEGK and NAGH. Catalysis depends on histidine 40, which acts as the Proton donor. Substrate is bound at residue 294 to 300; that stretch reads VTTGRRR. GTP contacts are provided by residues arginine 300, 326–328, and 409–411; these read KLD and GTG.

Belongs to the adenylosuccinate synthetase family. In terms of assembly, homodimer. It depends on Mg(2+) as a cofactor.

The protein localises to the cytoplasm. It carries out the reaction IMP + L-aspartate + GTP = N(6)-(1,2-dicarboxyethyl)-AMP + GDP + phosphate + 2 H(+). The protein operates within purine metabolism; AMP biosynthesis via de novo pathway; AMP from IMP: step 1/2. Plays an important role in the de novo pathway and in the salvage pathway of purine nucleotide biosynthesis. Catalyzes the first committed step in the biosynthesis of AMP from IMP. The protein is Adenylosuccinate synthetase of Paracoccidioides lutzii (strain ATCC MYA-826 / Pb01) (Paracoccidioides brasiliensis).